The primary structure comprises 147 residues: Small ribosomal subunit protein bS6 (147 aa).

The interval 96–147 is disordered; it reads VTEPSPMMKAKEERFTKRDDREERSDRSEAPRAEAPAKAEAPAKAEDEAAAE. The span at 104 to 147 shows a compositional bias: basic and acidic residues; that stretch reads KAKEERFTKRDDREERSDRSEAPRAEAPAKAEAPAKAEDEAAAE.

The protein belongs to the bacterial ribosomal protein bS6 family.

Functionally, binds together with bS18 to 16S ribosomal RNA. The protein is Small ribosomal subunit protein bS6 of Photobacterium profundum (strain SS9).